We begin with the raw amino-acid sequence, 314 residues long: Methionyl-tRNA formyltransferase (314 aa).

113-116 (SLLP) is a (6S)-5,6,7,8-tetrahydrofolate binding site.

It belongs to the Fmt family.

It carries out the reaction L-methionyl-tRNA(fMet) + (6R)-10-formyltetrahydrofolate = N-formyl-L-methionyl-tRNA(fMet) + (6S)-5,6,7,8-tetrahydrofolate + H(+). Functionally, attaches a formyl group to the free amino group of methionyl-tRNA(fMet). The formyl group appears to play a dual role in the initiator identity of N-formylmethionyl-tRNA by promoting its recognition by IF2 and preventing the misappropriation of this tRNA by the elongation apparatus. The chain is Methionyl-tRNA formyltransferase from Pseudomonas aeruginosa (strain ATCC 15692 / DSM 22644 / CIP 104116 / JCM 14847 / LMG 12228 / 1C / PRS 101 / PAO1).